Consider the following 427-residue polypeptide: Adenylosuccinate synthetase (427 aa).

GTP-binding positions include 12-18 (GDEGKGK) and 40-42 (GHT). The active-site Proton acceptor is the aspartate 13. Residues aspartate 13 and glycine 40 each coordinate Mg(2+). IMP-binding positions include 13–16 (DEGK), 38–41 (NAGH), threonine 128, arginine 142, glutamine 223, threonine 238, and arginine 302. Catalysis depends on histidine 41, which acts as the Proton donor. A substrate-binding site is contributed by 298-304 (TTTGRPR). Residues arginine 304, 330-332 (SID), and 412-414 (SVG) contribute to the GTP site.

This sequence belongs to the adenylosuccinate synthetase family. Homodimer. Requires Mg(2+) as cofactor.

The protein localises to the cytoplasm. The enzyme catalyses IMP + L-aspartate + GTP = N(6)-(1,2-dicarboxyethyl)-AMP + GDP + phosphate + 2 H(+). It functions in the pathway purine metabolism; AMP biosynthesis via de novo pathway; AMP from IMP: step 1/2. Plays an important role in the de novo pathway of purine nucleotide biosynthesis. Catalyzes the first committed step in the biosynthesis of AMP from IMP. This chain is Adenylosuccinate synthetase, found in Staphylococcus epidermidis (strain ATCC 12228 / FDA PCI 1200).